The chain runs to 83 residues: Greglin (83 aa).

Phosphoserine occurs at positions 8, 11, and 15. Intrachain disulfides connect C21–C55, C25–C48, C33–C69, and C53–C76.

Functionally, serine protease inhibitor. Inhibits porcine pancreatic elastase with a Ki of 58.3 nM, human neutrophil elastase with a Ki of 3.6 nM, cathepsin G with a Ki of 153.5 nM, chymotrypsin with a Ki of 26.7 nM and subtilisin with a Ki of 0.68 nM. Does not inhibit neutrophil protease 3 or pancreatic trypsin. The chain is Greglin from Schistocerca gregaria (Desert locust).